A 217-amino-acid chain; its full sequence is MNIKKKLIYSIISSKDTKEKESEEIVVKLSKQSNKKIYILHRALIHQLSNHRNRNAHTQTRGEVSGGGRKPWKQKGTGRARAGSNRSPLWRGGGVIFGPRHKKYVNKINKKEKQLALRILINNKFKNTIVTENFISKISTPNTKILVNNLKKYNLDTNNNILIIVNEKSNDLYLSTRNLKNVELLAANHLNIVSLLKANHIIINKDALDIINKMYND.

The disordered stretch occupies residues His51–Asn85.

This sequence belongs to the universal ribosomal protein uL4 family. As to quaternary structure, part of the 50S ribosomal subunit.

Its subcellular location is the plastid. It localises to the chloroplast. Probably binds the 23S rRNA. In Gracilaria tenuistipitata var. liui (Red alga), this protein is Large ribosomal subunit protein uL4c (rpl4).